The primary structure comprises 136 residues: Ribonuclease YqgF (136 aa).

It belongs to the YqgF nuclease family. Monomer; also forms low amounts of dimers. Requires Mn(2+) as cofactor.

Its subcellular location is the cytoplasm. In terms of biological role, has robust sequence-specific RNase activity, acting as a 5'-3' exo/endonuclease on ssRNA substrates with minimally 3 consecutive adenine bases. Has no detectable nuclease activity on dsRNA, dsDNA or Holliday junction DNA. The sequence is that of Ribonuclease YqgF from Deinococcus radiodurans (strain ATCC 13939 / DSM 20539 / JCM 16871 / CCUG 27074 / LMG 4051 / NBRC 15346 / NCIMB 9279 / VKM B-1422 / R1).